A 510-amino-acid polypeptide reads, in one-letter code: Beta-glucosidase 12 (510 aa).

Residues methionine 1 to glycine 24 form the signal peptide. Glutamine 53 is a binding site for a beta-D-glucoside. Asparagine 122 carries an N-linked (GlcNAc...) asparagine glycan. Residues histidine 157 and asparagine 202 to glutamate 203 each bind a beta-D-glucoside. The Proton donor role is filled by glutamate 203. 2 disulfide bridges follow: cysteine 208-cysteine 243 and cysteine 222-cysteine 230. A glycan (N-linked (GlcNAc...) asparagine) is linked at asparagine 229. Tyrosine 346 is an a beta-D-glucoside binding site. 2 N-linked (GlcNAc...) asparagine glycosylation sites follow: asparagine 361 and asparagine 371. Position 417 (glutamate 417) interacts with a beta-D-glucoside. Glutamate 417 serves as the catalytic Nucleophile. Residue asparagine 425 is glycosylated (N-linked (GlcNAc...) asparagine). Residues tryptophan 466, glutamate 473 to tryptophan 474, and phenylalanine 482 each bind a beta-D-glucoside.

The protein belongs to the glycosyl hydrolase 1 family.

It localises to the secreted. The enzyme catalyses Hydrolysis of terminal, non-reducing beta-D-glucosyl residues with release of beta-D-glucose.. Functionally, hydrolyzes p-nitrophenyl beta-D-glucoside, p-nitrophenyl beta-D-galactoside, p-nitrophenyl beta-D-xyloside, p-nitrophenyl beta-D-fucoside, p-nitrophenyl beta-L-arabinoside, cello-oligosaccharides and laminaribiose. This Oryza sativa subsp. japonica (Rice) protein is Beta-glucosidase 12.